Reading from the N-terminus, the 253-residue chain is GALGDRNGDCACDRPSPRGYWGGGMTGRSAFADPHIAEGRLANQDARLGTLEEEVDKLQHKYDDFIAGKTARRERFAQLKDRVWGLEAHHCDDDHLSCKDVAFTCIGHNLVCDGHKDCLNGHDEDEETCSIAASVGSSFEGQIRQLDTCTKRKPSAFRFIITNVDVPKYFPQEPHVKATILMTSSKDGHETQSSLAVDGVYDFTHRKVILYSPDKDNLIFECTFPRHDNNHCKGVMKHSGGDVCLTFTLERID.

An LDL-receptor class A domain is found at 89-131 (HHCDDDHLSCKDVAFTCIGHNLVCDGHKDCLNGHDEDEETCSI). Intrachain disulfides connect Cys91–Cys105, Cys98–Cys118, and Cys112–Cys129.

In terms of assembly, disulfide-linked dimer of identical chains. A model is proposed for the subunit structure of the Tylorrhynchus hemoglobin, consisting of 216 polypeptide chains, 192 heme-containing chains, and 24 linker chains.

Its function is as follows. Acts as a linker for the assembly of heme-containing chains in the construction of giant hemoglobin. In Tylorrhynchus heterochetus (Japanese palolo worm), this protein is Giant extracellular hemoglobin linker 1 chain.